A 506-amino-acid chain; its full sequence is ATP synthase subunit alpha (506 aa).

Gly169–Thr176 serves as a coordination point for ATP.

The protein belongs to the ATPase alpha/beta chains family. In terms of assembly, F-type ATPases have 2 components, CF(1) - the catalytic core - and CF(0) - the membrane proton channel. CF(1) has five subunits: alpha(3), beta(3), gamma(1), delta(1), epsilon(1). CF(0) has three main subunits: a(1), b(2) and c(9-12). The alpha and beta chains form an alternating ring which encloses part of the gamma chain. CF(1) is attached to CF(0) by a central stalk formed by the gamma and epsilon chains, while a peripheral stalk is formed by the delta and b chains.

Its subcellular location is the cell membrane. The enzyme catalyses ATP + H2O + 4 H(+)(in) = ADP + phosphate + 5 H(+)(out). Its function is as follows. Produces ATP from ADP in the presence of a proton gradient across the membrane. The alpha chain is a regulatory subunit. The sequence is that of ATP synthase subunit alpha from Lawsonia intracellularis (strain PHE/MN1-00).